Consider the following 150-residue polypeptide: 3-hydroxyacyl-[acyl-carrier-protein] dehydratase FabZ (150 aa).

H51 is an active-site residue.

It belongs to the thioester dehydratase family. FabZ subfamily.

The protein localises to the cytoplasm. The enzyme catalyses a (3R)-hydroxyacyl-[ACP] = a (2E)-enoyl-[ACP] + H2O. Functionally, involved in unsaturated fatty acids biosynthesis. Catalyzes the dehydration of short chain beta-hydroxyacyl-ACPs and long chain saturated and unsaturated beta-hydroxyacyl-ACPs. This Rubrobacter xylanophilus (strain DSM 9941 / JCM 11954 / NBRC 16129 / PRD-1) protein is 3-hydroxyacyl-[acyl-carrier-protein] dehydratase FabZ.